The sequence spans 256 residues: uncharacterized protein (256 aa).

Residues 1-22 form the signal peptide; that stretch reads MGYLKRIGMCISLLIVIIFVTS. Cysteine 23 is lipidated: N-palmitoyl cysteine. Cysteine 23 carries S-diacylglycerol cysteine lipidation.

The protein belongs to the staphylococcal tandem lipoprotein family.

It is found in the cell membrane. This is an uncharacterized protein from Staphylococcus aureus (strain MSSA476).